A 795-amino-acid polypeptide reads, in one-letter code: Phenylalanine--tRNA ligase beta subunit (795 aa).

Residues 39–149 enclose the tRNA-binding domain; it reads SGEFSGVVVA…ADAPIGVDIR (111 aa). Positions 402–477 constitute a B5 domain; it reads PKQPIIRLRR…RIYGYNRIPN (76 aa). Residues Asp-455, Asp-461, Glu-464, and Glu-465 each coordinate Mg(2+). Residues 701–794 enclose the FDX-ACB domain; sequence SKFPANNRDI…LAQRFQASLR (94 aa).

The protein belongs to the phenylalanyl-tRNA synthetase beta subunit family. Type 1 subfamily. Tetramer of two alpha and two beta subunits. Mg(2+) serves as cofactor.

Its subcellular location is the cytoplasm. It carries out the reaction tRNA(Phe) + L-phenylalanine + ATP = L-phenylalanyl-tRNA(Phe) + AMP + diphosphate + H(+). In Haemophilus ducreyi (strain 35000HP / ATCC 700724), this protein is Phenylalanine--tRNA ligase beta subunit.